The primary structure comprises 324 residues: MNQPIVFMFSGQGSQYYQMGKELFAHNAAFRQKMLDLDDFAVSRFGYSVLKEMYHTGNRLSDPFDRLLFSHPAIFMAEYALAYALEQRGIRPDYVIGASLGEYAAAAVSGVLSAEDALDCVLEQARIVTETCRNGSMLAILGDPALYQDDPLLGEHSELASVNYHSHFVISGEREHIKKIMDDLREKQIPHQLLPVSYGFHSALVDQAEQPYKRFLAQKSIRTPFIPYISSATGEAETDIQADFFWDIVRKPIRFREALQFADSRQKGLYIDAGPSGTLAAFAKQILPAGSAERIRAIMTPFHKEQTHLQQIEDSILSPPGRRL.

S99 is an active-site residue.

The protein resides in the cytoplasm. Its pathway is antibiotic biosynthesis; bacillaene biosynthesis. In terms of biological role, probably involved in some intermediate steps for the synthesis of the antibiotic polyketide bacillaene which is involved in secondary metabolism. This chain is Polyketide biosynthesis acyltransferase homolog BaeD (baeD), found in Bacillus velezensis (strain DSM 23117 / BGSC 10A6 / LMG 26770 / FZB42) (Bacillus amyloliquefaciens subsp. plantarum).